Here is a 329-residue protein sequence, read N- to C-terminus: Protein-arginine N-acetylglucosaminyltransferase NleB1 (329 aa).

N-beta-linked (GlcNAc) arginine; by autocatalysis glycosylation is present at Arg-13. 48-50 contributes to the UDP-N-acetyl-alpha-D-glucosamine binding site; it reads QWF. Arg-53 carries an N-beta-linked (GlcNAc) arginine; by autocatalysis glycan. Tyr-72 is a binding site for UDP-N-acetyl-alpha-D-glucosamine. A glycan (N-beta-linked (GlcNAc) arginine; by autocatalysis) is linked at Arg-159. Position 219-222 (219-222) interacts with UDP-N-acetyl-alpha-D-glucosamine; that stretch reads YLDA. Residues 221–223 carry the DXD motif motif; that stretch reads DAD. Asp-223 contributes to the Mn(2+) binding site. Residue Glu-253 is the Proton acceptor of the active site. Arg-293 is a glycosylation site (N-beta-linked (GlcNAc) arginine; by autocatalysis). 2 residues coordinate Mn(2+): Asn-320 and Ser-322. Residues Ser-322 and 327–329 each bind UDP-N-acetyl-alpha-D-glucosamine; that span reads SSW.

The protein belongs to the glycosyltransferase NleB family. Requires Mn(2+) as cofactor. Auto-glycosylated: arginine GlcNAcylation is required for activity toward death domain-containing host target proteins.

It is found in the secreted. Its subcellular location is the host cytoplasm. It carries out the reaction L-arginyl-[protein] + UDP-N-acetyl-alpha-D-glucosamine = N(omega)-(N-acetyl-beta-D-glucosaminyl)-L-arginyl-[protein] + UDP + H(+). Protein-arginine N-acetylglucosaminyltransferase activity is inhibited by 100066N compound (flavone analog) and 102644N compound (a substituted isoxazole). Protein-arginine N-acetylglucosaminyltransferase effector that disrupts TNF signaling in infected cells, including NF-kappa-B signaling, apoptosis and necroptosis. Acts by catalyzing the transfer of a single N-acetylglucosamine (GlcNAc) to a conserved arginine residue in the death domain of host proteins such as FADD: arginine GlcNAcylation prevents homotypic/heterotypic death domain interactions and assembly of the oligomeric TNF-alpha receptor complex, thereby disrupting TNF signaling. Also acts on host proteins without a death domain: catalyzes arginine GlcNAcylation of host GAPDH protein, thereby preventing GAPDH interaction with TRAF2, leading to inhibit NF-kappa-B signaling. Catalyzes auto-GlcNAcylation, which is required for activity toward death domain-containing host target proteins. The protein is Protein-arginine N-acetylglucosaminyltransferase NleB1 of Escherichia coli O157:H7.